The sequence spans 571 residues: Proline--tRNA ligase (571 aa).

Belongs to the class-II aminoacyl-tRNA synthetase family. ProS type 1 subfamily. As to quaternary structure, homodimer.

Its subcellular location is the cytoplasm. The catalysed reaction is tRNA(Pro) + L-proline + ATP = L-prolyl-tRNA(Pro) + AMP + diphosphate. Its function is as follows. Catalyzes the attachment of proline to tRNA(Pro) in a two-step reaction: proline is first activated by ATP to form Pro-AMP and then transferred to the acceptor end of tRNA(Pro). As ProRS can inadvertently accommodate and process non-cognate amino acids such as alanine and cysteine, to avoid such errors it has two additional distinct editing activities against alanine. One activity is designated as 'pretransfer' editing and involves the tRNA(Pro)-independent hydrolysis of activated Ala-AMP. The other activity is designated 'posttransfer' editing and involves deacylation of mischarged Ala-tRNA(Pro). The misacylated Cys-tRNA(Pro) is not edited by ProRS. The sequence is that of Proline--tRNA ligase from Pseudomonas paraeruginosa (strain DSM 24068 / PA7) (Pseudomonas aeruginosa (strain PA7)).